A 388-amino-acid polypeptide reads, in one-letter code: Na(+)/H(+) antiporter NhaA (388 aa).

Residues 1 to 11 (MKHLHRFFSSD) are Cytoplasmic-facing. The helical transmembrane segment at 12–31 (ASGGIILIIAAILAMMMANS) threads the bilayer. The Periplasmic portion of the chain corresponds to 32 to 58 (GATSGWYHDFLETPVQLRVGSLEINKN). The helical transmembrane segment at 59-80 (MLLWINDALMAVFFLLVGLEVK) threads the bilayer. Topologically, residues 81–96 (RELMQGSLASLRQAAF) are cytoplasmic. A helical transmembrane segment spans residues 97 to 116 (PVIAAIGGMIVPALLYLAFN). The Periplasmic portion of the chain corresponds to 117 to 122 (YADPIT). A helical transmembrane segment spans residues 123-130 (REGWAIPA). Over 131–154 (ATDIAFALGVLALLGSRVPLALKI) the chain is Cytoplasmic. The chain crosses the membrane as a helical span at residues 155 to 176 (FLMALAIIDDLGAIIIIALFYT). Residues 177–180 (NDLS) lie on the Periplasmic side of the membrane. Residues 181–200 (MASLGVAAVAIAVLAVLNLC) traverse the membrane as a helical segment. Residues 201 to 204 (GVRR) lie on the Cytoplasmic side of the membrane. A helical membrane pass occupies residues 205-222 (TGVYILVGVVLWTAVLKS). G223 is a topological domain (periplasmic). A helical membrane pass occupies residues 224–236 (VHATLAGVIVGFF). At 237 to 253 (IPLKEKHGRSTAKRLEH) the chain is on the cytoplasmic side. A helical membrane pass occupies residues 254–272 (VLHPWVAYLILPLFAFANA). The Periplasmic segment spans residues 273–286 (GVSLQGVTLDGLTS). A helical membrane pass occupies residues 287–310 (ILPLGIIAGLLIGKPLGISLFCWL). The Cytoplasmic segment spans residues 311–339 (ALRLKLAHLPEGTTYQQIMAVGILCGIGF). The chain crosses the membrane as a helical span at residues 340-350 (TMSIFIASLAF). At 351–357 (GSVDPEL) the chain is on the periplasmic side. Residues 358–380 (INWAKLGILVGSISSAVIGYSWL) traverse the membrane as a helical segment. Over 381–388 (RVRLRPSV) the chain is Cytoplasmic.

It belongs to the NhaA Na(+)/H(+) (TC 2.A.33) antiporter family.

It is found in the cell inner membrane. The catalysed reaction is Na(+)(in) + 2 H(+)(out) = Na(+)(out) + 2 H(+)(in). Functionally, na(+)/H(+) antiporter that extrudes sodium in exchange for external protons. This is Na(+)/H(+) antiporter NhaA from Shigella dysenteriae serotype 1 (strain Sd197).